A 283-amino-acid polypeptide reads, in one-letter code: Bifunctional protein FolD (283 aa).

NADP(+) is bound by residues 165-167 (GAS), Ser-190, and Ile-231.

It belongs to the tetrahydrofolate dehydrogenase/cyclohydrolase family. In terms of assembly, homodimer.

The catalysed reaction is (6R)-5,10-methylene-5,6,7,8-tetrahydrofolate + NADP(+) = (6R)-5,10-methenyltetrahydrofolate + NADPH. It carries out the reaction (6R)-5,10-methenyltetrahydrofolate + H2O = (6R)-10-formyltetrahydrofolate + H(+). Its pathway is one-carbon metabolism; tetrahydrofolate interconversion. Its function is as follows. Catalyzes the oxidation of 5,10-methylenetetrahydrofolate to 5,10-methenyltetrahydrofolate and then the hydrolysis of 5,10-methenyltetrahydrofolate to 10-formyltetrahydrofolate. The protein is Bifunctional protein FolD of Bordetella bronchiseptica (strain ATCC BAA-588 / NCTC 13252 / RB50) (Alcaligenes bronchisepticus).